A 217-amino-acid polypeptide reads, in one-letter code: Adenylate kinase (217 aa).

11 to 16 lines the ATP pocket; that stretch reads GAGKGT. The tract at residues 31-60 is NMP; sequence STGDMFREAMANETPVGLEAKSYIDKGNLV. AMP contacts are provided by residues Thr32, Arg37, 58-60, 86-89, and Gln93; these read NLV and GFPR. Residues 127-165 form an LID region; the sequence is ARYICKKCGATYNKISNPTKVEGTCDRCGGHEFFQREDD. An ATP-binding site is contributed by Arg128. 2 residues coordinate Zn(2+): Cys131 and Cys134. Residue 137–138 participates in ATP binding; that stretch reads TY. Zn(2+) contacts are provided by Cys151 and Cys154. Residues Arg162 and Arg173 each coordinate AMP. Gln201 is a binding site for ATP.

Belongs to the adenylate kinase family. In terms of assembly, monomer.

It is found in the cytoplasm. It carries out the reaction AMP + ATP = 2 ADP. It participates in purine metabolism; AMP biosynthesis via salvage pathway; AMP from ADP: step 1/1. Functionally, catalyzes the reversible transfer of the terminal phosphate group between ATP and AMP. Plays an important role in cellular energy homeostasis and in adenine nucleotide metabolism. The polypeptide is Adenylate kinase (Lactobacillus johnsonii (strain CNCM I-12250 / La1 / NCC 533)).